Consider the following 150-residue polypeptide: Cytochrome c-type biogenesis protein CcmE (150 aa).

The Cytoplasmic segment spans residues 1-7 (MTRKQKR). The chain crosses the membrane as a helical; Signal-anchor for type II membrane protein span at residues 8 to 28 (LAIIGGGVGFLTAAVLLVMFA). At 29–150 (FSQAVAYFYV…VTLGGKENIQ (122 aa)) the chain is on the periplasmic side. Positions 123 and 127 each coordinate heme.

Belongs to the CcmE/CycJ family.

Its subcellular location is the cell inner membrane. Heme chaperone required for the biogenesis of c-type cytochromes. Transiently binds heme delivered by CcmC and transfers the heme to apo-cytochromes in a process facilitated by CcmF and CcmH. In Sinorhizobium fredii (strain NBRC 101917 / NGR234), this protein is Cytochrome c-type biogenesis protein CcmE.